Reading from the N-terminus, the 402-residue chain is Elongation factor Tu (402 aa).

The tr-type G domain occupies 16–211 (KEHINIGTIG…AVDSYIDSPV (196 aa)). A G1 region spans residues 25-32 (GHVDHGKT). Residue 25 to 32 (GHVDHGKT) coordinates GTP. Position 32 (Thr-32) interacts with Mg(2+). Residues 66 to 70 (GITIN) form a G2 region. Positions 87 to 90 (DCPG) are G3. Residues 87–91 (DCPGH) and 142–145 (NKID) contribute to the GTP site. The interval 142 to 145 (NKID) is G4. A G5 region spans residues 181 to 183 (SAR).

This sequence belongs to the TRAFAC class translation factor GTPase superfamily. Classic translation factor GTPase family. EF-Tu/EF-1A subfamily. Monomer.

Its subcellular location is the cytoplasm. The enzyme catalyses GTP + H2O = GDP + phosphate + H(+). GTP hydrolase that promotes the GTP-dependent binding of aminoacyl-tRNA to the A-site of ribosomes during protein biosynthesis. The chain is Elongation factor Tu from Mesomycoplasma hyopneumoniae (strain 232) (Mycoplasma hyopneumoniae).